The primary structure comprises 156 residues: CKLF-like MARVEL transmembrane domain-containing protein 5 (156 aa).

Positions 29-146 constitute an MARVEL domain; that stretch reads FLSSLKGILL…DAFKIYRTEL (118 aa). 4 consecutive transmembrane segments (helical) span residues 35-55, 56-76, 93-113, and 119-139; these read GILL…FTAS, ISAY…FLFL, LDFL…FAAV, and AAIA…YDAF.

Belongs to the chemokine-like factor family.

It localises to the membrane. The sequence is that of CKLF-like MARVEL transmembrane domain-containing protein 5 (Cmtm5) from Mus musculus (Mouse).